The following is a 561-amino-acid chain: Lipase maturation factor 1 (561 aa).

Residues Met-1–Gly-32 are disordered. Over Met-1–Phe-42 the chain is Cytoplasmic. The helical transmembrane segment at Trp-43 to Phe-65 threads the bilayer. Residues His-66–Asp-120 are Lumenal-facing. Residues Ala-121 to Met-144 traverse the membrane as a helical segment. The Cytoplasmic segment spans residues Ala-145–Met-200. The chain crosses the membrane as a helical span at residues Trp-201–Ala-214. Topologically, residues Gly-215–Gly-285 are lumenal. Residues Ala-286 to Ala-314 form a helical membrane-spanning segment. At Cys-315–Thr-360 the chain is on the cytoplasmic side. The helical transmembrane segment at Val-361–Ser-382 threads the bilayer. Residues Pro-383–Glu-561 are Lumenal-facing.

The protein belongs to the lipase maturation factor family. As to quaternary structure, interacts with LPL and SEL1L.

The protein resides in the endoplasmic reticulum membrane. Involved in the maturation of specific proteins in the endoplasmic reticulum. Required for maturation and transport of active lipoprotein lipase (LPL) through the secretory pathway. Each LMF1 molecule chaperones 50 or more molecules of LPL. The protein is Lipase maturation factor 1 (LMF1) of Bos taurus (Bovine).